We begin with the raw amino-acid sequence, 289 residues long: Polyamine aminopropyltransferase (289 aa).

In terms of domain architecture, PABS spans 5–245 (PGPITLIEPL…YAVNFILGSL (241 aa)). S-methyl-5'-thioadenosine is bound at residue glutamine 36. Residues histidine 67 and glutamate 91 each coordinate spermidine. Residues aspartate 111 and 143-144 (DG) each bind S-methyl-5'-thioadenosine. Aspartate 164 (proton acceptor) is an active-site residue.

It belongs to the spermidine/spermine synthase family. As to quaternary structure, homodimer or homotetramer.

Its subcellular location is the cytoplasm. It carries out the reaction S-adenosyl 3-(methylsulfanyl)propylamine + putrescine = S-methyl-5'-thioadenosine + spermidine + H(+). It functions in the pathway amine and polyamine biosynthesis; spermidine biosynthesis; spermidine from putrescine: step 1/1. Catalyzes the irreversible transfer of a propylamine group from the amino donor S-adenosylmethioninamine (decarboxy-AdoMet) to putrescine (1,4-diaminobutane) to yield spermidine. The polypeptide is Polyamine aminopropyltransferase (Pyrobaculum calidifontis (strain DSM 21063 / JCM 11548 / VA1)).